The chain runs to 310 residues: MQWMEIKIVFDAAEPELAQEMVSYLVMEHGAEGLEMTTPGETGMVQDGSGSSVPDSKEHSVTAFLPLDDLFEGRKADLTRALDDLKGSVLTDYSVHFSKQDDQPWETAWKAHFHPIEIGESLVIKPSWEDYENPEKRMLIELDPGMAFGTGTHPTTAVCLEMIETECLKKAPERFLDVGTGSGILMIGAYKLGARKVFGCDNDMDALEAAAKNLKGNQVHEGDFGLWLGDLLAGIVEGAFDMVAANITAEANVMLIPGLPRIMAPGSIFIASGIMAEKKDLVLEALDACRFSVERVQETGGWVGIAARMP.

Residues T156, G179, D201, and N246 each contribute to the S-adenosyl-L-methionine site.

It belongs to the methyltransferase superfamily. PrmA family.

The protein localises to the cytoplasm. The catalysed reaction is L-lysyl-[protein] + 3 S-adenosyl-L-methionine = N(6),N(6),N(6)-trimethyl-L-lysyl-[protein] + 3 S-adenosyl-L-homocysteine + 3 H(+). Methylates ribosomal protein L11. The polypeptide is Ribosomal protein L11 methyltransferase (Desulfatibacillum aliphaticivorans).